A 288-amino-acid chain; its full sequence is Acetyl-coenzyme A carboxylase carboxyl transferase subunit beta (288 aa).

Residues 34 to 288 enclose the CoA carboxyltransferase N-terminal domain; sequence LWVKCSRCNE…ANILSLHGTN (255 aa). C38, C41, C57, and C60 together coordinate Zn(2+). Residues 38-60 form a C4-type zinc finger; it reads CSRCNEILYTKELDKNFKVCHKC.

It belongs to the AccD/PCCB family. Acetyl-CoA carboxylase is a heterohexamer composed of biotin carboxyl carrier protein (AccB), biotin carboxylase (AccC) and two subunits each of ACCase subunit alpha (AccA) and ACCase subunit beta (AccD). The cofactor is Zn(2+).

The protein resides in the cytoplasm. It carries out the reaction N(6)-carboxybiotinyl-L-lysyl-[protein] + acetyl-CoA = N(6)-biotinyl-L-lysyl-[protein] + malonyl-CoA. The protein operates within lipid metabolism; malonyl-CoA biosynthesis; malonyl-CoA from acetyl-CoA: step 1/1. Functionally, component of the acetyl coenzyme A carboxylase (ACC) complex. Biotin carboxylase (BC) catalyzes the carboxylation of biotin on its carrier protein (BCCP) and then the CO(2) group is transferred by the transcarboxylase to acetyl-CoA to form malonyl-CoA. This Desulforamulus reducens (strain ATCC BAA-1160 / DSM 100696 / MI-1) (Desulfotomaculum reducens) protein is Acetyl-coenzyme A carboxylase carboxyl transferase subunit beta.